The following is a 480-amino-acid chain: Gasdermin-C2 (480 aa).

Positions Met1–Lys226 are triggers pyroptosis.

Belongs to the gasdermin family. In terms of assembly, homooligomer; homooligomeric ring-shaped pore complex containing 27-28 subunits when inserted in the membrane. Post-translationally, cleavage by CASP8 relieves autoinhibition by releasing the N-terminal moiety (Gasdermin-C2, N-terminal) that initiates pyroptosis. In terms of processing, palmitoylated.

It is found in the cytoplasm. The protein resides in the cytosol. Its subcellular location is the cell membrane. The full-length protein before cleavage is inactive: intramolecular interactions between N- and C-terminal domains mediate autoinhibition in the absence of activation signal. The intrinsic pyroptosis-inducing activity is carried by the released N-terminal moiety (Gasdermin-C2, N-terminal) following cleavage by caspase CASP8 in response to type-2 immunity following worm infection. This form constitutes the precursor of the pore-forming protein: upon cleavage, the released N-terminal moiety (Gasdermin-C2, N-terminal) binds to membranes and forms pores, triggering pyroptosis. Functionally, pore-forming protein that causes membrane permeabilization and pyroptosis in response to type-2 immunity. Produced by the cleavage of gasdermin-C2 in response to type-2 immunity following worm infection. After cleavage, moves to the plasma membrane where it strongly binds to membrane inner leaflet lipids. Homooligomerizes within the membrane and forms pores of 10-15 nanometers (nm) of inner diameter, triggering pyroptosis and lytic cell death in enterocytes. The polypeptide is Gasdermin-C2 (Mus musculus (Mouse)).